A 396-amino-acid polypeptide reads, in one-letter code: Small ribosomal subunit protein uS9m (396 aa).

A disordered region spans residues P374–R396.

Belongs to the universal ribosomal protein uS9 family. Component of the mitochondrial ribosome small subunit (28S) which comprises a 12S rRNA and about 30 distinct proteins.

The protein localises to the mitochondrion. This is Small ribosomal subunit protein uS9m (MRPS9) from Bos taurus (Bovine).